We begin with the raw amino-acid sequence, 241 residues long: Antimicrobial ginkbilobin-2-like protein (241 aa).

The N-terminal stretch at 1-23 (MLSSKYISVSFLLLSLSLHAVNC) is a signal peptide. Gnk2-homologous domains are found at residues 25-127 (DPLY…NIDF) and 133-238 (NKNK…LYPF). Disulfide bonds link Cys-81–Cys-90, Cys-93–Cys-118, Cys-192–Cys-201, and Cys-204–Cys-229. Asn-89 is a glycosylation site (N-linked (GlcNAc...) asparagine).

This sequence belongs to the cysteine-rich repeat secretory protein family.

Its subcellular location is the secreted. In terms of biological role, possesses antimicrobial activity toward the oomycete Phytophthora cinnamomi (ink disease agent), thus reducing its growth rate and confering an increased resistance to the plant. The sequence is that of Antimicrobial ginkbilobin-2-like protein from Castanea crenata (Japanese chestnut).